The chain runs to 554 residues: Asparagine synthetase B [glutamine-hydrolyzing] (554 aa).

The For GATase activity role is filled by Cys-2. Residues 2-186 enclose the Glutamine amidotransferase type-2 domain; that stretch reads CSIFGVFDIK…AGSYLWSQDG (185 aa). L-glutamine contacts are provided by residues 50–54, 75–77, and Asp-99; these read RLSIV and NGE. ATP-binding positions include Leu-233, Val-273, and 347-348; that span reads SG.

Belongs to the asparagine synthetase family. Homodimer.

The catalysed reaction is L-aspartate + L-glutamine + ATP + H2O = L-asparagine + L-glutamate + AMP + diphosphate + H(+). Its pathway is amino-acid biosynthesis; L-asparagine biosynthesis; L-asparagine from L-aspartate (L-Gln route): step 1/1. Glutamine-dependent asparagine synthesis activity can be inhibited by aspartic acid analogs (such as a sulfinate derivative and (2S,3R)-2-amino-3-methylsuccinate) in vitro; the inhibition is competitive with respect to aspartate. Catalyzes the ATP-dependent conversion of aspartate into asparagine, using glutamine as a source of nitrogen. Can also use ammonia as the nitrogen source in vitro, albeit with lower efficiency. As nucleotide substrates, ATP and dATP are utilized at a similar rate in both the glutamine- and ammonia-dependent reactions, whereas GTP utilization is only 15% that of ATP, and CTP, UTP, ITP and XTP are very poor or not substrates. Also exhibits glutaminase activity. In Escherichia coli (strain K12), this protein is Asparagine synthetase B [glutamine-hydrolyzing] (asnB).